A 346-amino-acid polypeptide reads, in one-letter code: Dihydroorotase (346 aa).

Residues His17 and His19 each contribute to the Zn(2+) site. Residues 19–21 and Asn45 each bind substrate; that span reads HLR. Zn(2+)-binding residues include Lys103, His140, and His178. Position 103 is an N6-carboxylysine (Lys103). Residue His140 participates in substrate binding. Position 223 (Leu223) interacts with substrate. Residue Asp251 coordinates Zn(2+). Asp251 is a catalytic residue. Residues His255 and Ala267 each coordinate substrate.

The protein belongs to the metallo-dependent hydrolases superfamily. DHOase family. Class II DHOase subfamily. In terms of assembly, homodimer. The cofactor is Zn(2+).

The catalysed reaction is (S)-dihydroorotate + H2O = N-carbamoyl-L-aspartate + H(+). It functions in the pathway pyrimidine metabolism; UMP biosynthesis via de novo pathway; (S)-dihydroorotate from bicarbonate: step 3/3. Its function is as follows. Catalyzes the reversible cyclization of carbamoyl aspartate to dihydroorotate. The sequence is that of Dihydroorotase from Synechococcus sp. (strain RCC307).